The following is a 261-amino-acid chain: Transmembrane protein 106A (261 aa).

Residues 1 to 23 (MGKAVSQLTSRKDEDKPILPDNP) are disordered. A helical transmembrane segment spans residues 93-113 (LFVFLSVAICLLIFSLTIFFL).

It belongs to the TMEM106 family. As to expression, expressed in liver, spleen, lung, kidney, lymph nodes and adipose tissue (at protein level). Expressed by macrophages.

It is found in the cell membrane. Its function is as follows. Activates macrophages and polarizes them into M1-like macrophages through the activation of the MAPK and NF-kappaB signaling pathway. Upon activation, up-regulates the expression of CD80, CD86, CD69 and MHC II on macrophages, and induces the release of pro-inflammatory cytokines such as TNF, IL1B, IL6, CCL2 and nitric oxide. May play a role in inhibition of proliferation and migration. This Mus musculus (Mouse) protein is Transmembrane protein 106A (Tmem106a).